The following is a 489-amino-acid chain: MSFNSVLFIAELPLLLTALTAIAVMLSIAWQRNHKQVFYITVIGLNAALFSLLPASSATPVTVTPLLIVDSYSVFYSALILIGSLATVTLARAWLKKFPDNREEFYLLLSLASTGAMVMAQAHHLAAIFIGVELMSLPLFGLVGYAFRQRRSLEAAVKYMVLSASATAFLLFGIALIYAQVGSLDIATIGAQISRLPQAESAHITLLIVGLGMVVIGFGFKLSLVPFHLWTPDVYQGAPAPVTTYLATVSKIAVFAVLLRLFYTIPATDSFFYSLLGGLAFISIIIGNLLALLQSNLKRLLGFSSTAHFGYLLVALIACRLGSLSQEAVALYLVMYLLTSVGSFGVVSLMSSPYQERDADELPAYRGLFWRRPILTSAMTIMFLSLAGIPMTLGFIGKFYILAVGIQFHLWWLTGAVVFGSAVGLYYYLRVISILYLKTPGMPSRDATNDWALTTGGFMVLTSAILVVLLGIYPQPLLDLLPLAQLATP.

Helical transmembrane passes span 6 to 26 (VLFIAELPLLLTALTAIAVML), 37 to 57 (VFYITVIGLNAALFSLLPASS), 66 to 86 (LLIVDSYSVFYSALILIGSLA), 105 to 125 (FYLLLSLASTGAMVMAQAHHL), 127 to 147 (AIFIGVELMSLPLFGLVGYAF), 159 to 179 (YMVLSASATAFLLFGIALIYA), 204 to 224 (ITLLIVGLGMVVIGFGFKLSL), 239 to 259 (PAPVTTYLATVSKIAVFAVLL), 271 to 291 (FFYSLLGGLAFISIIIGNLLA), 299 to 319 (RLLGFSSTAHFGYLLVALIAC), 329 to 349 (VALYLVMYLLTSVGSFGVVSL), 377 to 397 (SAMTIMFLSLAGIPMTLGFIG), 408 to 430 (FHLWWLTGAVVFGSAVGLYYYLR), and 452 to 472 (ALTTGGFMVLTSAILVVLLGI).

Belongs to the complex I subunit 2 family. In terms of assembly, NDH-1 is composed of 14 different subunits. Subunits NuoA, H, J, K, L, M, N constitute the membrane sector of the complex.

It localises to the cell inner membrane. It carries out the reaction a quinone + NADH + 5 H(+)(in) = a quinol + NAD(+) + 4 H(+)(out). Its function is as follows. NDH-1 shuttles electrons from NADH, via FMN and iron-sulfur (Fe-S) centers, to quinones in the respiratory chain. The immediate electron acceptor for the enzyme in this species is believed to be ubiquinone. Couples the redox reaction to proton translocation (for every two electrons transferred, four hydrogen ions are translocated across the cytoplasmic membrane), and thus conserves the redox energy in a proton gradient. The sequence is that of NADH-quinone oxidoreductase subunit N from Tolumonas auensis (strain DSM 9187 / NBRC 110442 / TA 4).